The chain runs to 151 residues: Salivary C-type lectin 2 (151 aa).

A signal peptide spans 1-15; sequence MKLLLSFALLGLVAC. One can recognise a C-type lectin domain in the interval 25 to 147; the sequence is YCFPNEVATW…CTSKRRFVCE (123 aa). Cystine bridges form between C41-C146 and C118-C138.

Ca(2+) serves as cofactor. Expressed in female salivary gland. Not detected or low-level expression in female midgut and fat body.

It localises to the secreted. Salivary protein with carbohydrate-binding activity. Binds to D-mannose, D-galactose, D-glucose and maltose. Agglutinates host erythrocytes. Probably participates in mosquito innate immune responses to prevent microorganism multiplication in sugar and blood meals. Its function is as follows. (Microbial infection) Binds to the surface of and agglutinates Escherichia coli in vitro. Functionally, (Microbial infection) Binds to the surface of and agglutinates Pseudomonas aeruginosa in vitro. In terms of biological role, (Microbial infection) Binds to the surface of and agglutinates Bacillus subtilis in vitro. (Microbial infection) Agglutinates Staphylococcus aureus in vitro. Its function is as follows. (Microbial infection) Agglutinates Candida albicans in vitro. Functionally, (Microbial infection) Does not affect replication of dengue virus type 2 in host cells. This Aedes albopictus (Asian tiger mosquito) protein is Salivary C-type lectin 2.